A 23-amino-acid chain; its full sequence is Brevinin-1SE (23 aa).

The cysteines at positions 17 and 23 are disulfide-linked.

Expressed by the skin glands.

The protein resides in the secreted. Its function is as follows. Mast cell degranulating peptide. Causes histamine release from rat peritoneal mast cells in vitro. Has antibacterial activity against the Gram-negative bacterium E.coli K12 and Gram-positive bacterium M.luteus NCT C2665. The polypeptide is Brevinin-1SE (Lithobates sevosus (Dusky gopher frog)).